The primary structure comprises 469 residues: Spermatogenesis-associated protein 21 (469 aa).

Disordered regions lie at residues 1 to 76 (MDNR…AGTQ) and 99 to 157 (HRRA…MGAP). The span at 49–61 (EVRDIGERREPDR) shows a compositional bias: basic and acidic residues. Residues 62 to 73 (AQQQPQKPAVAA) show a composition bias toward low complexity. Residues 105–132 (ARSQTAQKSPRTLTPVPTSAPSLPQTPA) are compositionally biased toward polar residues. Pro residues predominate over residues 146–157 (APGPEPAPMGAP). A coiled-coil region spans residues 198 to 225 (EPEEQSLQKLYQNREKSEEQLTLKQEEA). The EF-hand domain maps to 255–290 (VTLAQVEDALMSADVNGDGRVDFKDFLAVMTDTRRF). The Ca(2+) site is built by aspartate 268, asparagine 270, aspartate 272, arginine 274, and aspartate 279. Residues 424–469 (YALDQCTPPGLDPDIRSPFFQSGSQGNREHNSDSRKWLSSVPARTH) are disordered. Basic and acidic residues predominate over residues 450-459 (NREHNSDSRK).

Involved in the differentiation of haploid spermatids. This chain is Spermatogenesis-associated protein 21 (SPATA21), found in Homo sapiens (Human).